A 515-amino-acid chain; its full sequence is 2,3-bisphosphoglycerate-independent phosphoglycerate mutase (515 aa).

Aspartate 14 and serine 64 together coordinate Mn(2+). The active-site Phosphoserine intermediate is serine 64. Residues histidine 125, 155-156, arginine 187, arginine 193, 263-266, and lysine 337 each bind substrate; these read RD and RADR. Mn(2+)-binding residues include aspartate 404, histidine 408, aspartate 445, histidine 446, and histidine 464.

Belongs to the BPG-independent phosphoglycerate mutase family. As to quaternary structure, monomer. It depends on Mn(2+) as a cofactor.

It carries out the reaction (2R)-2-phosphoglycerate = (2R)-3-phosphoglycerate. The protein operates within carbohydrate degradation; glycolysis; pyruvate from D-glyceraldehyde 3-phosphate: step 3/5. Catalyzes the interconversion of 2-phosphoglycerate and 3-phosphoglycerate. The chain is 2,3-bisphosphoglycerate-independent phosphoglycerate mutase from Yersinia pseudotuberculosis serotype I (strain IP32953).